The sequence spans 489 residues: N-succinylglutamate 5-semialdehyde dehydrogenase (489 aa).

224–229 (GSAKVG) contacts NAD(+). Residues glutamate 247 and cysteine 281 contribute to the active site.

It belongs to the aldehyde dehydrogenase family. AstD subfamily.

It carries out the reaction N-succinyl-L-glutamate 5-semialdehyde + NAD(+) + H2O = N-succinyl-L-glutamate + NADH + 2 H(+). It participates in amino-acid degradation; L-arginine degradation via AST pathway; L-glutamate and succinate from L-arginine: step 4/5. Its function is as follows. Catalyzes the NAD-dependent reduction of succinylglutamate semialdehyde into succinylglutamate. The sequence is that of N-succinylglutamate 5-semialdehyde dehydrogenase from Chromohalobacter salexigens (strain ATCC BAA-138 / DSM 3043 / CIP 106854 / NCIMB 13768 / 1H11).